The sequence spans 540 residues: 2-isopropylmalate synthase (540 aa).

One can recognise a Pyruvate carboxyltransferase domain in the interval 8 to 271 (VLIFDTTLRD…NPFFGREEDS (264 aa)). Mn(2+)-binding residues include Asp-17, His-208, His-210, and Asn-244. The segment at 408-540 (QLKLVQVSCG…PVVLESRPTL (133 aa)) is regulatory domain.

This sequence belongs to the alpha-IPM synthase/homocitrate synthase family. LeuA type 1 subfamily. As to quaternary structure, homodimer. Mn(2+) is required as a cofactor.

The protein localises to the cytoplasm. It catalyses the reaction 3-methyl-2-oxobutanoate + acetyl-CoA + H2O = (2S)-2-isopropylmalate + CoA + H(+). It participates in amino-acid biosynthesis; L-leucine biosynthesis; L-leucine from 3-methyl-2-oxobutanoate: step 1/4. Catalyzes the condensation of the acetyl group of acetyl-CoA with 3-methyl-2-oxobutanoate (2-ketoisovalerate) to form 3-carboxy-3-hydroxy-4-methylpentanoate (2-isopropylmalate). The protein is 2-isopropylmalate synthase of Synechococcus sp. (strain CC9605).